We begin with the raw amino-acid sequence, 318 residues long: Protein FdhE homolog (318 aa).

Belongs to the FdhE family.

It localises to the cytoplasm. In terms of biological role, necessary for formate dehydrogenase activity. The sequence is that of Protein FdhE homolog from Pseudomonas putida (strain ATCC 47054 / DSM 6125 / CFBP 8728 / NCIMB 11950 / KT2440).